Consider the following 476-residue polypeptide: Adenosylhomocysteinase (476 aa).

Substrate is bound by residues Thr67, Asp142, and Glu202. Residue 203 to 205 (TTT) participates in NAD(+) binding. The substrate site is built by Lys232 and Asp236. NAD(+) contacts are provided by residues Asn237, 266–271 (GYGDVG), Glu289, Asn324, 345–347 (IGH), and Asn390.

It belongs to the adenosylhomocysteinase family. NAD(+) serves as cofactor.

Its subcellular location is the cytoplasm. The enzyme catalyses S-adenosyl-L-homocysteine + H2O = L-homocysteine + adenosine. It functions in the pathway amino-acid biosynthesis; L-homocysteine biosynthesis; L-homocysteine from S-adenosyl-L-homocysteine: step 1/1. In terms of biological role, may play a key role in the regulation of the intracellular concentration of adenosylhomocysteine. The protein is Adenosylhomocysteinase of Synechococcus sp. (strain CC9902).